The primary structure comprises 284 residues: Nucleoid occlusion protein (284 aa).

Residues E143 to L162 constitute a DNA-binding region (H-T-H motif).

The protein belongs to the ParB family.

It localises to the cytoplasm. The protein localises to the nucleoid. Its function is as follows. Effects nucleoid occlusion by binding relatively nonspecifically to DNA and preventing the assembly of the division machinery in the vicinity of the nucleoid, especially under conditions that disturb the cell cycle. It helps to coordinate cell division and chromosome segregation by preventing the formation of the Z ring through the nucleoid, which would cause chromosome breakage. In Listeria monocytogenes serovar 1/2a (strain ATCC BAA-679 / EGD-e), this protein is Nucleoid occlusion protein.